We begin with the raw amino-acid sequence, 87 residues long: Large ribosomal subunit protein uL23c (87 aa).

It belongs to the universal ribosomal protein uL23 family. As to quaternary structure, part of the 50S ribosomal subunit.

It localises to the plastid. Its subcellular location is the chloroplast. Functionally, binds to 23S rRNA. The protein is Large ribosomal subunit protein uL23c (rpl23) of Bigelowiella natans (Pedinomonas minutissima).